The following is a 259-amino-acid chain: Thrombin-like enzyme gyroxin B1.7 (259 aa).

An N-terminal signal peptide occupies residues methionine 1–alanine 18. Positions glutamine 19–proline 259 are excised as a propeptide. The region spanning valine 25 to alanine 250 is the Peptidase S1 domain. Disulfide bonds link cysteine 31–cysteine 162, cysteine 49–cysteine 65, cysteine 141–cysteine 211, cysteine 173–cysteine 190, and cysteine 201–cysteine 226. Catalysis depends on histidine 64, which acts as the Charge relay system. Residue asparagine 102 is glycosylated (N-linked (GlcNAc...) asparagine). Catalysis depends on aspartate 109, which acts as the Charge relay system. Serine 205 acts as the Charge relay system in catalysis.

It belongs to the peptidase S1 family. Snake venom subfamily. As to quaternary structure, monomer. Expressed by the venom gland.

Its subcellular location is the secreted. Its function is as follows. Thrombin-like snake venom serine protease. Displays a specificity similar to trypsin. Releases only fibrinopeptide A in the conversion of fibrinogen to fibrin. Shows coagulant, esterase and amidase activities. Reversibly increases the permeability of the blood brain barrier (BBB) in mice. Induces the barrel rotation syndrome in mice, which is manifested by gyroxin-like, rapid rolling motions. This syndrome may be due to its effect on BBB permeability, and certainly also to other actions affecting endogenous substrates present in the endothelium, nervous tissues or blood. The protein is Thrombin-like enzyme gyroxin B1.7 of Crotalus durissus terrificus (South American rattlesnake).